A 502-amino-acid polypeptide reads, in one-letter code: Protein IWS1 homolog 1 (502 aa).

Residues 1–12 (MGFEDDPYRDVD) show a composition bias toward basic and acidic residues. 2 disordered regions span residues 1-61 (MGFE…DNDK) and 87-208 (DEDV…DEDE). 3 stretches are compositionally biased toward acidic residues: residues 13 to 22 (GEPIVDFDDF), 34 to 49 (QDFD…DWDG), and 87 to 97 (DEDVDDAEFDE). Basic and acidic residues-rich tracts occupy residues 138-151 (NRGE…DEMW) and 181-194 (PSER…DRSP). Position 185 is a phosphotyrosine (Tyr-185). Positions 287–370 (TLLKNWLEPL…DKWSRPIFNK (84 aa)) constitute a TFIIS N-terminal domain. The disordered stretch occupies residues 385-434 (VPYRRPPVKKPSNKATMESRDGDFDLEIRERKTGLTSGQSSRGDRQMTMR). The span at 401-417 (MESRDGDFDLEIRERKT) shows a compositional bias: basic and acidic residues.

Belongs to the IWS1 family. As to quaternary structure, interacts with BZR2/BES1 and SPT6 (via N-terminus). Interacts with ASHH2/SDG8.

Its subcellular location is the nucleus. In terms of biological role, transcription factor involved in RNA polymerase II (RNAPII) transcription regulation. Involved in transcription elongation. May function at post-recruitment and elongation steps of transcription. May be recruited by BZR2/BES1 to target genes and promote their expression during transcription elongation process. Required for brassinosteroid (BR)-induced gene expression. Required the for regulation of numerous nitrogen-responsive genes in roots. Acts in roots to repress NRT2.1 transcription in response to high nitrogen supply. This repression is associated with an IWS1-dependent increase of trimethylation on 'Lys-27' H3K27me3 at the NRT2.1 locus. This is Protein IWS1 homolog 1 from Arabidopsis thaliana (Mouse-ear cress).